Reading from the N-terminus, the 428-residue chain is MKRVELEGIPEVRGTVCPPPSKSGSHRALIAASLCDGSTELWNVLDAEDVRATLRLCRMLGAEVDVDGEERLEATVSGFGDSPRAPEDVVDCGNSGTTLRLGCGLAALVEGTTILTGDDSLRSRPVGDLLAALRSLGVDARGRVVRGEEYPPVVISGRPLRERVAVYGDVSSQFVSALLFLGAGLGALRVDVVGDLRSRPYVDMTVETLERFGVSVVREGSSFEVEGRPRSPGKLRVENDWSSAGYFVALGAIGGEMRIEGVDLDSSHPDRRIVEITREMGAEVRRIDGGIVVRSTGRLEGVEVDLSDSPDLVPTVAAMACFAEGVTRIENVGHLRYKEVDRLRALAAELPKFGVEVREGKDWLEIVGGEPVGARVDSRGDHRMAMALAVVGAFARGKTVVERADAVSISYPRFWEDLASVGVPVHSV.

The 3-phosphoshikimate site is built by lysine 22, serine 23, and arginine 27. Lysine 22 provides a ligand contact to phosphoenolpyruvate. Positions 96 and 124 each coordinate phosphoenolpyruvate. 6 residues coordinate 3-phosphoshikimate: serine 171, serine 172, glutamine 173, serine 198, aspartate 311, and lysine 338. Glutamine 173 serves as a coordination point for phosphoenolpyruvate. The active-site Proton acceptor is aspartate 311. Phosphoenolpyruvate contacts are provided by arginine 342 and arginine 383.

The protein belongs to the EPSP synthase family. As to quaternary structure, monomer.

It is found in the cytoplasm. It carries out the reaction 3-phosphoshikimate + phosphoenolpyruvate = 5-O-(1-carboxyvinyl)-3-phosphoshikimate + phosphate. Its pathway is metabolic intermediate biosynthesis; chorismate biosynthesis. In terms of biological role, catalyzes the transfer of the enolpyruvyl moiety of phosphoenolpyruvate (PEP) to the 5-hydroxyl of shikimate-3-phosphate (S3P) to produce enolpyruvyl shikimate-3-phosphate and inorganic phosphate. The polypeptide is 3-phosphoshikimate 1-carboxyvinyltransferase (Methanopyrus kandleri (strain AV19 / DSM 6324 / JCM 9639 / NBRC 100938)).